A 325-amino-acid polypeptide reads, in one-letter code: Ubiquitin thioesterase OTU1 (325 aa).

The UBX-like stretch occupies residues 7–86 (RIRSKTGVEN…NVSSISSNPG (80 aa)). Residues 123–246 (ATRRVTDDDN…GIHYDALSIC (124 aa)) enclose the OTU domain. The tract at residues 128 to 134 (TDDDNSC) is cys-loop. Asp-131 is a catalytic residue. The active-site Nucleophile is Cys-134. The segment at 185 to 195 (IQNPKNWGGAI) is variable-loop. Residues 235 to 239 (YDGIH) form a his-loop region. Ile-238 provides a ligand contact to substrate. His-239 is a catalytic residue. The segment at 265–270 (KDSLAK) is S2 site. The segment at 292 to 316 (LICLNCNKTLKGEKEAAIHASTTGH) adopts a C2H2-type zinc-finger fold. His-316 is a catalytic residue.

It localises to the cytoplasm. The catalysed reaction is Thiol-dependent hydrolysis of ester, thioester, amide, peptide and isopeptide bonds formed by the C-terminal Gly of ubiquitin (a 76-residue protein attached to proteins as an intracellular targeting signal).. Functionally, hydrolase that can remove conjugated ubiquitin from proteins and may therefore play an important regulatory role at the level of protein turnover by preventing degradation. This chain is Ubiquitin thioesterase OTU1 (yod1), found in Dictyostelium discoideum (Social amoeba).